The sequence spans 231 residues: 5'-methylthioadenosine/S-adenosylhomocysteine nucleosidase (231 aa).

The active-site Proton acceptor is Glu-13. Substrate contacts are provided by residues Gly-79, Met-153, and Met-174–Glu-175. The Proton donor role is filled by Asp-198.

The protein belongs to the PNP/UDP phosphorylase family. MtnN subfamily.

The catalysed reaction is S-adenosyl-L-homocysteine + H2O = S-(5-deoxy-D-ribos-5-yl)-L-homocysteine + adenine. It carries out the reaction S-methyl-5'-thioadenosine + H2O = 5-(methylsulfanyl)-D-ribose + adenine. The enzyme catalyses 5'-deoxyadenosine + H2O = 5-deoxy-D-ribose + adenine. Its pathway is amino-acid biosynthesis; L-methionine biosynthesis via salvage pathway; S-methyl-5-thio-alpha-D-ribose 1-phosphate from S-methyl-5'-thioadenosine (hydrolase route): step 1/2. Functionally, catalyzes the irreversible cleavage of the glycosidic bond in both 5'-methylthioadenosine (MTA) and S-adenosylhomocysteine (SAH/AdoHcy) to adenine and the corresponding thioribose, 5'-methylthioribose and S-ribosylhomocysteine, respectively. Also cleaves 5'-deoxyadenosine, a toxic by-product of radical S-adenosylmethionine (SAM) enzymes, into 5-deoxyribose and adenine. The sequence is that of 5'-methylthioadenosine/S-adenosylhomocysteine nucleosidase from Halalkalibacterium halodurans (strain ATCC BAA-125 / DSM 18197 / FERM 7344 / JCM 9153 / C-125) (Bacillus halodurans).